Reading from the N-terminus, the 523-residue chain is Mitochondrial distribution and morphology protein 12 (523 aa).

The 483-residue stretch at M1–A483 folds into the SMP-LTD domain. The segment covering H108–D117 has biased composition (basic and acidic residues). 4 disordered regions span residues H108–E160, S178–S213, K270–N313, and A483–D523. Acidic residues-rich tracts occupy residues Y118–N140 and E148–Y158. 2 stretches are compositionally biased toward polar residues: residues S178–P187 and S277–K288. The span at A289–N313 shows a compositional bias: basic and acidic residues. Over residues A483–N501 the composition is skewed to acidic residues. The segment covering E502–D523 has biased composition (basic and acidic residues).

Belongs to the MDM12 family. In terms of assembly, component of the ER-mitochondria encounter structure (ERMES) or MDM complex, composed of MMM1, MDM10, MDM12 and MDM34. An MMM1 homodimer associates with one molecule of MDM12 on each side in a pairwise head-to-tail manner, and the SMP-LTD domains of MMM1 and MDM12 generate a continuous hydrophobic tunnel for phospholipid trafficking.

It localises to the mitochondrion outer membrane. The protein resides in the endoplasmic reticulum membrane. Component of the ERMES/MDM complex, which serves as a molecular tether to connect the endoplasmic reticulum (ER) and mitochondria. Components of this complex are involved in the control of mitochondrial shape and protein biogenesis, and function in nonvesicular lipid trafficking between the ER and mitochondria. MDM12 is required for the interaction of the ER-resident membrane protein MMM1 and the outer mitochondrial membrane-resident beta-barrel protein MDM10. The MDM12-MMM1 subcomplex functions in the major beta-barrel assembly pathway that is responsible for biogenesis of all mitochondrial outer membrane beta-barrel proteins, and acts in a late step after the SAM complex. The MDM10-MDM12-MMM1 subcomplex further acts in the TOM40-specific pathway after the action of the MDM12-MMM1 complex. Essential for establishing and maintaining the structure of mitochondria and maintenance of mtDNA nucleoids. This Lodderomyces elongisporus (strain ATCC 11503 / CBS 2605 / JCM 1781 / NBRC 1676 / NRRL YB-4239) (Yeast) protein is Mitochondrial distribution and morphology protein 12.